The following is a 671-amino-acid chain: MAQIQHQGQNANGGVAVPGAAAAEAAAAAAGAAAAAAGAAQQGTTSLYVGDLDATVTDSQLFEAFTQAGQVVSVRVCRDMTTRRSLGYGYVNYATPQDASRALNELNFMALNGRAIRVMYSVRDPSLRKSGVGNIFIKNLDKSIDHKALHETFSAFGPILSCKVAVDPSGQSKGYGFVQYDTDEAAQGAIDKLNGMLLNDKQVYVGPFVHKLQRDPSGEKVKFTNVYVKNLSESLSDEELNKVFGEFGVTTSCVIMRDGEGKSKGFGFVNFENSDDAARAVDALNGKTFDDKEWFVGKAQKKSERETELKQKFEQSLKEAADKSQGSNLYVKNLDESVTDDKLREHFAPFGTITSCKVMRDPSGVSRGSGFVAFSTPEEATRAITEMNGKMIVTKPLYVALAQRKEDRKARLQAQFSQMRPVNMPPAVGPRMQMYPPGGPPMGQQLFYGQGPPAMIPQPGFGYQQQLVPGMRPGGSPMPNFFMPMMQQGQQQQQQQQQQQRPGGGRRGALPQPQQPSPMMQQQMHPRGRMYRYPQRDVNTMPGPTQNMLSVPYDVSSGGGVHHRDSPTSQPVPIVALATRLANAAPEQQRTMLGENLYPLVEQLEPESAAKVTGMLLEMDQTEVLHLLESPEALKAKVTEAMDVLRSVAQQQAGGAADQLASLSLGDNIVP.

RRM domains follow at residues 45-123 (TSLY…YSVR), 133-210 (GNIF…PFVH), 224-301 (TNVY…KAQK), and 327-404 (SNLY…LAQR). The tract at residues 467–526 (LVPGMRPGGSPMPNFFMPMMQQGQQQQQQQQQQQRPGGGRRGALPQPQQPSPMMQQQMHP) is disordered. 2 stretches are compositionally biased toward low complexity: residues 483-501 (MPMM…QQQR) and 508-525 (GALP…QQMH). In terms of domain architecture, PABC spans 573 to 650 (PIVALATRLA…AMDVLRSVAQ (78 aa)).

Belongs to the polyadenylate-binding protein type-1 family. As to quaternary structure, interacts with ERD15/CID1. Interacts with Turnip mosaic virus (TuMV) VPg-Pro and RNA-dependent RNA polymerase (RdRp). Expressed predominantly in immature flowers.

The protein resides in the cytoplasm. It is found in the nucleus. Its function is as follows. Binds the poly(A) tail of mRNA. Appears to be an important mediator of the multiple roles of the poly(A) tail in mRNA biogenesis, stability and translation. During infection with potyvirus TuMV, acts as a potential integral component of the viral replicase complex that could play an important role in the regulation of potyviral RNA-dependent RNA polymerase (RdRp). In Arabidopsis thaliana (Mouse-ear cress), this protein is Polyadenylate-binding protein 8 (PAB8).